The chain runs to 442 residues: Glutamyl-tRNA reductase (442 aa).

Substrate contacts are provided by residues 49-52 (TCNR), S109, 114-116 (ESQ), and Q120. The active-site Nucleophile is the C50. 189–194 (GAGAMS) is an NADP(+) binding site.

It belongs to the glutamyl-tRNA reductase family. As to quaternary structure, homodimer.

The enzyme catalyses (S)-4-amino-5-oxopentanoate + tRNA(Glu) + NADP(+) = L-glutamyl-tRNA(Glu) + NADPH + H(+). The protein operates within porphyrin-containing compound metabolism; protoporphyrin-IX biosynthesis; 5-aminolevulinate from L-glutamyl-tRNA(Glu): step 1/2. In terms of biological role, catalyzes the NADPH-dependent reduction of glutamyl-tRNA(Glu) to glutamate 1-semialdehyde (GSA). The protein is Glutamyl-tRNA reductase of Kineococcus radiotolerans (strain ATCC BAA-149 / DSM 14245 / SRS30216).